Consider the following 787-residue polypeptide: Endonuclease MutS2 (787 aa).

334–341 is an ATP binding site; sequence GPNTGGKT. The disordered stretch occupies residues 685 to 709; sequence KAQDPAKSAKQPRASVKRSGSSGMS. One can recognise a Smr domain in the interval 712–787; the sequence is LDLRGHRYEE…GDGSTVVHFK (76 aa).

Belongs to the DNA mismatch repair MutS family. MutS2 subfamily. Homodimer. Binds to stalled ribosomes, contacting rRNA.

In terms of biological role, endonuclease that is involved in the suppression of homologous recombination and thus may have a key role in the control of bacterial genetic diversity. Acts as a ribosome collision sensor, splitting the ribosome into its 2 subunits. Detects stalled/collided 70S ribosomes which it binds and splits by an ATP-hydrolysis driven conformational change. Acts upstream of the ribosome quality control system (RQC), a ribosome-associated complex that mediates the extraction of incompletely synthesized nascent chains from stalled ribosomes and their subsequent degradation. Probably generates substrates for RQC. The chain is Endonuclease MutS2 from Levilactobacillus brevis (strain ATCC 367 / BCRC 12310 / CIP 105137 / JCM 1170 / LMG 11437 / NCIMB 947 / NCTC 947) (Lactobacillus brevis).